The following is a 428-amino-acid chain: Sarcosine reductase complex component B subunit alpha (428 aa).

Cys242 carries the post-translational modification Pyruvic acid (Cys).

In terms of assembly, heterotetramer of two alpha and two beta subunits. Component of the sarcosine reductase complex, together with components A and C. PB is substrate specific. The peptide chain is cleaved into beta and alpha chains, and the alpha chain N-terminal cysteine is deaminated and oxidized to form a reactive pyruvoyl group.

The enzyme catalyses acetyl phosphate + methylamine + [thioredoxin]-disulfide + H2O = sarcosine + [thioredoxin]-dithiol + phosphate + H(+). In the first step of sarcosine reductase, the substrate is bound to component PB via a Schiff base intermediate. Then the PB-activated substrate is nucleophilically attacked by the selenol anion of component PA to transform it to a carboxymethylated selenoether and the respective amine. By action of component PC, acetyl phosphate is formed, leaving component PA in its oxidized state. Finally component PA becomes reduced by the thioredoxin system to start a new catalytic cycle of reductive deamination. This is Sarcosine reductase complex component B subunit alpha (grdG) from Peptoclostridium acidaminophilum (Eubacterium acidaminophilum).